Here is a 683-residue protein sequence, read N- to C-terminus: DNA ligase (683 aa).

Residues 35–39, 84–85, and E115 contribute to the NAD(+) site; these read DADYD and SL. K117 functions as the N6-AMP-lysine intermediate in the catalytic mechanism. Positions 138, 175, 293, and 317 each coordinate NAD(+). Residues C411, C414, C429, and C435 each coordinate Zn(2+). Residues 598 to 683 enclose the BRCT domain; the sequence is QTNSAVSGKT…LQNISTGAQQ (86 aa).

This sequence belongs to the NAD-dependent DNA ligase family. LigA subfamily. It depends on Mg(2+) as a cofactor. Requires Mn(2+) as cofactor.

It carries out the reaction NAD(+) + (deoxyribonucleotide)n-3'-hydroxyl + 5'-phospho-(deoxyribonucleotide)m = (deoxyribonucleotide)n+m + AMP + beta-nicotinamide D-nucleotide.. DNA ligase that catalyzes the formation of phosphodiester linkages between 5'-phosphoryl and 3'-hydroxyl groups in double-stranded DNA using NAD as a coenzyme and as the energy source for the reaction. It is essential for DNA replication and repair of damaged DNA. In Nitrosomonas eutropha (strain DSM 101675 / C91 / Nm57), this protein is DNA ligase.